Reading from the N-terminus, the 542-residue chain is Chaperonin GroEL (542 aa).

ATP-binding positions include T29–P32, D86–T90, G413, N477–A479, and D493.

This sequence belongs to the chaperonin (HSP60) family. Forms a cylinder of 14 subunits composed of two heptameric rings stacked back-to-back. Interacts with the co-chaperonin GroES.

The protein resides in the cytoplasm. It carries out the reaction ATP + H2O + a folded polypeptide = ADP + phosphate + an unfolded polypeptide.. Its function is as follows. Together with its co-chaperonin GroES, plays an essential role in assisting protein folding. The GroEL-GroES system forms a nano-cage that allows encapsulation of the non-native substrate proteins and provides a physical environment optimized to promote and accelerate protein folding. This Beutenbergia cavernae (strain ATCC BAA-8 / DSM 12333 / CCUG 43141 / JCM 11478 / NBRC 16432 / NCIMB 13614 / HKI 0122) protein is Chaperonin GroEL.